Consider the following 119-residue polypeptide: Large ribosomal subunit protein bL20 (119 aa).

Belongs to the bacterial ribosomal protein bL20 family.

In terms of biological role, binds directly to 23S ribosomal RNA and is necessary for the in vitro assembly process of the 50S ribosomal subunit. It is not involved in the protein synthesizing functions of that subunit. The polypeptide is Large ribosomal subunit protein bL20 (Bradyrhizobium sp. (strain BTAi1 / ATCC BAA-1182)).